Here is a 171-residue protein sequence, read N- to C-terminus: Siroheme decarboxylase NirH subunit (171 aa).

It belongs to the Ahb/Nir family. In terms of assembly, probably forms a complex composed of NirD, NirL, NirG and NirH. All proteins are required for the total conversion of siroheme to didecarboxysiroheme.

The catalysed reaction is siroheme + 2 H(+) = 12,18-didecarboxysiroheme + 2 CO2. It participates in porphyrin-containing compound metabolism. Involved in heme d1 biosynthesis. Catalyzes the decarboxylation of siroheme into didecarboxysiroheme. This Pseudomonas aeruginosa (strain ATCC 15692 / DSM 22644 / CIP 104116 / JCM 14847 / LMG 12228 / 1C / PRS 101 / PAO1) protein is Siroheme decarboxylase NirH subunit.